The sequence spans 183 residues: NADH dehydrogenase [ubiquinone] iron-sulfur protein 4, mitochondrial (183 aa).

Residues 1 to 28 (MSALRQVMCRSTASLQLYQANRAAAARW) constitute a mitochondrion transit peptide. Ser181 is subject to Phosphoserine.

The protein belongs to the complex I NDUFS4 subunit family.

The protein localises to the mitochondrion inner membrane. In terms of biological role, accessory subunit of the mitochondrial membrane respiratory chain NADH dehydrogenase (Complex I), that is believed not to be involved in catalysis. Complex I functions in the transfer of electrons from NADH to the respiratory chain. The immediate electron acceptor for the enzyme is believed to be ubiquinone. This chain is NADH dehydrogenase [ubiquinone] iron-sulfur protein 4, mitochondrial, found in Drosophila melanogaster (Fruit fly).